A 49-amino-acid chain; its full sequence is Small ribosomal subunit protein eS31 (49 aa).

Zn(2+) contacts are provided by Cys-21, Cys-24, Cys-39, and Cys-42. A C4-type zinc finger spans residues 21 to 42; sequence CPRCGPGTFLADHKNRLTCGKC.

It belongs to the eukaryotic ribosomal protein eS31 family. Part of the 30S ribosomal subunit. The cofactor is Zn(2+).

This is Small ribosomal subunit protein eS31 from Methanosarcina barkeri (strain Fusaro / DSM 804).